A 172-amino-acid chain; its full sequence is dCTP deaminase (172 aa).

DCTP is bound by residues 97 to 102 (RSSFAR) and Asp113. The Proton donor/acceptor role is filled by Glu123. Tyr155 and Gln162 together coordinate dCTP.

It belongs to the dCTP deaminase family. As to quaternary structure, homotrimer.

The enzyme catalyses dCTP + H2O + H(+) = dUTP + NH4(+). Its pathway is pyrimidine metabolism; dUMP biosynthesis; dUMP from dCTP (dUTP route): step 1/2. Functionally, catalyzes the deamination of dCTP to dUTP. This Metallosphaera sedula (strain ATCC 51363 / DSM 5348 / JCM 9185 / NBRC 15509 / TH2) protein is dCTP deaminase.